The sequence spans 300 residues: Enoyl-CoA hydratase domain-containing protein 3, mitochondrial (300 aa).

The N-terminal 66 residues, 1-66 (MALVAGLRAF…RNIVLSNPRR (66 aa)), are a transit peptide targeting the mitochondrion. Residues 32–54 (SPGSARPAGPESEPRLTSTRQQD) are disordered. Residue lysine 110 is modified to N6-succinyllysine.

It belongs to the enoyl-CoA hydratase/isomerase family.

It localises to the mitochondrion. May play a role in fatty acid biosynthesis and insulin sensitivity. The chain is Enoyl-CoA hydratase domain-containing protein 3, mitochondrial from Rattus norvegicus (Rat).